We begin with the raw amino-acid sequence, 196 residues long: Pyridoxal 5'-phosphate synthase subunit PdxT (196 aa).

52-54 contacts L-glutamine; sequence GES. The Nucleophile role is filled by C84. L-glutamine-binding positions include R113 and 141 to 142; that span reads IR. Active-site charge relay system residues include H178 and E180.

The protein belongs to the glutaminase PdxT/SNO family. As to quaternary structure, in the presence of PdxS, forms a dodecamer of heterodimers. Only shows activity in the heterodimer.

The catalysed reaction is aldehydo-D-ribose 5-phosphate + D-glyceraldehyde 3-phosphate + L-glutamine = pyridoxal 5'-phosphate + L-glutamate + phosphate + 3 H2O + H(+). It catalyses the reaction L-glutamine + H2O = L-glutamate + NH4(+). It participates in cofactor biosynthesis; pyridoxal 5'-phosphate biosynthesis. Functionally, catalyzes the hydrolysis of glutamine to glutamate and ammonia as part of the biosynthesis of pyridoxal 5'-phosphate. The resulting ammonia molecule is channeled to the active site of PdxS. The protein is Pyridoxal 5'-phosphate synthase subunit PdxT of Pyrococcus abyssi (strain GE5 / Orsay).